Consider the following 197-residue polypeptide: Recombination protein RecR (197 aa).

A C4-type zinc finger spans residues 56–71 (CQQCRTLTEQALCNIC). Positions 79–174 (KELCIVETPA…KVSRIAHGIP (96 aa)) constitute a Toprim domain.

Belongs to the RecR family.

Its function is as follows. May play a role in DNA repair. It seems to be involved in an RecBC-independent recombinational process of DNA repair. It may act with RecF and RecO. The sequence is that of Recombination protein RecR from Saccharophagus degradans (strain 2-40 / ATCC 43961 / DSM 17024).